Here is a 229-residue protein sequence, read N- to C-terminus: Peroxiredoxin-like 2A (229 aa).

Residues M14–V112 form a thioredoxin fold region. Catalysis depends on redox-active residues C85 and C88.

The protein belongs to the peroxiredoxin-like PRXL2 family. PRXL2A subfamily. Expressed in CSF1 and TNFSF11-stimulated CD14(+) peripheral blood mononuclear cells (PBMCs).

Its subcellular location is the cytoplasm. It localises to the secreted. Its function is as follows. Involved in redox regulation of the cell. Acts as an antioxidant. Inhibits TNFSF11-induced NFKB1 and JUN activation and osteoclast differentiation. May affect bone resorption and help to maintain bone mass. Acts as a negative regulator of macrophage-mediated inflammation by inhibiting macrophage production of inflammatory cytokines, probably through suppression of the MAPK signaling pathway. The protein is Peroxiredoxin-like 2A of Homo sapiens (Human).